Reading from the N-terminus, the 245-residue chain is Endogenous retrovirus group K member 5 Env polyprotein (245 aa).

Positions 1–245 (MVTPVTWMDN…TLEFGLEIKL (245 aa)) are truncated surface protein.

It belongs to the beta type-B retroviral envelope protein family. HERV class-II K(HML-2) env subfamily. Expressed in lung, placenta, testis, peripheral blood lymphocytes, and teratocarcinoma cell lines.

It localises to the virion. Retroviral envelope proteins mediate receptor recognition and membrane fusion during early infection. Endogenous envelope proteins may have kept, lost or modified their original function during evolution. The polypeptide is Endogenous retrovirus group K member 5 Env polyprotein (ERVK-5) (Homo sapiens (Human)).